The primary structure comprises 250 residues: Ditrans,polycis-undecaprenyl-diphosphate synthase ((2E,6E)-farnesyl-diphosphate specific) (250 aa).

Residue Asp27 is part of the active site. Asp27 contacts Mg(2+). Substrate-binding positions include 28 to 31 (GNGR), Trp32, Arg40, His44, and 72 to 74 (SSE). Asn75 (proton acceptor) is an active-site residue. Substrate is bound by residues Trp76, Arg78, and Arg195. His200 contributes to the Mg(2+) binding site. 201 to 203 (RIS) lines the substrate pocket. Glu214 lines the Mg(2+) pocket.

Belongs to the UPP synthase family. As to quaternary structure, homodimer. Mg(2+) is required as a cofactor.

The catalysed reaction is 8 isopentenyl diphosphate + (2E,6E)-farnesyl diphosphate = di-trans,octa-cis-undecaprenyl diphosphate + 8 diphosphate. Functionally, catalyzes the sequential condensation of isopentenyl diphosphate (IPP) with (2E,6E)-farnesyl diphosphate (E,E-FPP) to yield (2Z,6Z,10Z,14Z,18Z,22Z,26Z,30Z,34E,38E)-undecaprenyl diphosphate (di-trans,octa-cis-UPP). UPP is the precursor of glycosyl carrier lipid in the biosynthesis of bacterial cell wall polysaccharide components such as peptidoglycan and lipopolysaccharide. The protein is Ditrans,polycis-undecaprenyl-diphosphate synthase ((2E,6E)-farnesyl-diphosphate specific) of Blochmanniella floridana.